The sequence spans 171 residues: N5-carboxyaminoimidazole ribonucleotide mutase (171 aa).

Residues serine 13, aspartate 16, and arginine 43 each coordinate substrate.

Belongs to the AIR carboxylase family. Class I subfamily.

It carries out the reaction 5-carboxyamino-1-(5-phospho-D-ribosyl)imidazole + H(+) = 5-amino-1-(5-phospho-D-ribosyl)imidazole-4-carboxylate. It functions in the pathway purine metabolism; IMP biosynthesis via de novo pathway; 5-amino-1-(5-phospho-D-ribosyl)imidazole-4-carboxylate from 5-amino-1-(5-phospho-D-ribosyl)imidazole (N5-CAIR route): step 2/2. Catalyzes the conversion of N5-carboxyaminoimidazole ribonucleotide (N5-CAIR) to 4-carboxy-5-aminoimidazole ribonucleotide (CAIR). The protein is N5-carboxyaminoimidazole ribonucleotide mutase of Mycobacterium leprae (strain TN).